A 193-amino-acid polypeptide reads, in one-letter code: Holliday junction branch migration complex subunit RuvA (193 aa).

The tract at residues 1 to 64 (MIGRIAGVLL…EDAHLLYGFL (64 aa)) is domain I. Positions 65-139 (TPQERSTFRE…GKLGADLGAM (75 aa)) are domain II. The tract at residues 139 to 143 (MAGAA) is flexible linker. A domain III region spans residues 144–193 (SQSDHASDILNALLALGYSEKEGLAAIKNVPAGTGVSEGIKLALKALSKA).

Belongs to the RuvA family. In terms of assembly, homotetramer. Forms an RuvA(8)-RuvB(12)-Holliday junction (HJ) complex. HJ DNA is sandwiched between 2 RuvA tetramers; dsDNA enters through RuvA and exits via RuvB. An RuvB hexamer assembles on each DNA strand where it exits the tetramer. Each RuvB hexamer is contacted by two RuvA subunits (via domain III) on 2 adjacent RuvB subunits; this complex drives branch migration. In the full resolvosome a probable DNA-RuvA(4)-RuvB(12)-RuvC(2) complex forms which resolves the HJ.

Its subcellular location is the cytoplasm. The RuvA-RuvB-RuvC complex processes Holliday junction (HJ) DNA during genetic recombination and DNA repair, while the RuvA-RuvB complex plays an important role in the rescue of blocked DNA replication forks via replication fork reversal (RFR). RuvA specifically binds to HJ cruciform DNA, conferring on it an open structure. The RuvB hexamer acts as an ATP-dependent pump, pulling dsDNA into and through the RuvAB complex. HJ branch migration allows RuvC to scan DNA until it finds its consensus sequence, where it cleaves and resolves the cruciform DNA. The sequence is that of Holliday junction branch migration complex subunit RuvA from Paraburkholderia phymatum (strain DSM 17167 / CIP 108236 / LMG 21445 / STM815) (Burkholderia phymatum).